A 358-amino-acid polypeptide reads, in one-letter code: G-protein coupled receptor 87 (358 aa).

Residues 1-47 (MGLNLTLTKLPGNELYSQASHTANSTSEGHGKNSTLHNKFDTIILPV) lie on the Extracellular side of the membrane. N-linked (GlcNAc...) asparagine glycosylation is found at Asn-4, Asn-24, and Asn-33. A helical transmembrane segment spans residues 48-68 (LYLVIFVASILLNGLAVWIFF). Residues 69–75 (HIRNKTS) are Cytoplasmic-facing. Residues 76–96 (FIFYLKNIVVADLIMTLTFPF) form a helical membrane-spanning segment. Residues 97-116 (RIVRDAGFGPWYFEFILCRY) lie on the Extracellular side of the membrane. Cysteines 114 and 192 form a disulfide. The chain crosses the membrane as a helical span at residues 117–137 (TSVLFYANMYTSIVFLGLISV). Residues 138-159 (DRYLKVVKPFGDSRMYSITFTK) lie on the Cytoplasmic side of the membrane. The chain crosses the membrane as a helical span at residues 160-180 (VLSVCVWVIMAILSLPNIILT). Topologically, residues 181–208 (NGQPTKENIHDCMKLKSPLGAKWHMAVT) are extracellular. Residues 209–229 (YVDSCLFVAVLVILIGCYIAI) form a helical membrane-spanning segment. Residues 230–256 (SRYIHKSSRQFISQSSRKRKHNQSIRV) lie on the Cytoplasmic side of the membrane. Residues 257-277 (VVAVFFTCFLPYHLCRIPFTF) form a helical membrane-spanning segment. At 278–297 (SNLDRLLDESAHKILYYCKE) the chain is on the extracellular side. Residues 298 to 318 (MTLFLSACNVCLDPIIYFFMC) form a helical membrane-spanning segment. Topologically, residues 319–358 (KSFSRRLFKKSNIRTRSESIRSLQSVRRSEVRIYYDYTDV) are cytoplasmic.

The protein belongs to the G-protein coupled receptor 1 family. Expressed at high levels in testis and brain and to a lesser extent placenta, ovary, prostate, and skeletal muscle but not in heart, lung, kidney, liver or intestine.

It localises to the cell membrane. Functionally, receptor for lysophosphatidic acid (LPA). Necessary for p53/TP53-dependent survival in response to DNA damage. Promotes the Hippo-YAP signaling pathway and thereby modulates glycolysis and oxidative stress production by the regulation of hexokinase-2/HK2. The chain is G-protein coupled receptor 87 (Gpr87) from Mus musculus (Mouse).